The sequence spans 638 residues: MQEIITNNIPTFKLQNDVDMVEETQPTTPTTQPTTPTTNTISTTTNTITSTLNTNNISPILEESEEEDSNELIIETDENNTSVSATGTTPTSSSSSSSSSPTNTTTTTTTTTTATTANNDFKNITSNNINKTNSNVNTNSEIKNIDNSIMNSLNRYNNITTASPSNSTMITMKSAISSLDEIVKNTMKAQRESFIANEDKESLPEPQTNSNVNGNEEAKDEKEIHLLAKILLNFSSNGIAVPNLSESSPAVLNTKLKDSSNLVPYGGDLNTSVNGVVGNSSGMVDLSASTGDLLGSLNAANKKKRQRTSPEQLAILEQIFETDKMPSQQIRVRLANQLGMSSRRVQIWFQNKRAKVKRGGPFGKGDDNDDLFAEGEDIIDEDEDEDSSLTIDESGNNNNNSGNNNNNNNNGIMGGHGMLSSSPTNLNTSSDNIVPSISPMLTSININSSSSTPTLQSVNLLNNTNNNNNNNNNNNNNNNNNNNNNNNHTTTTTTTTTTTTTSSSPPLTSFNFQLNQSLNKLTSPPSPPSIVPSPNKKTKQMGGFSLNSTASSLPSFPQIKLNSSSKHIPTDKQNNSDFSNFNNNNNNNNNNNNNNNNNNNINNNGNNNSNNNDSNNNNNKSNFSDYQPLKFHNSIVKN.

Disordered stretches follow at residues 23–55 (ETQP…LNTN), 76–139 (TDEN…VNTN), and 195–219 (IANE…EEAK). Composition is skewed to low complexity over residues 24 to 55 (TQPT…LNTN) and 80 to 139 (NTSV…VNTN). A compositionally biased stretch (polar residues) spans 205-214 (EPQTNSNVNG). Residues 301-360 (NKKKRQRTSPEQLAILEQIFETDKMPSQQIRVRLANQLGMSSRRVQIWFQNKRAKVKRGG) constitute a DNA-binding region (homeobox). Disordered regions lie at residues 381 to 431 (EDED…TSSD) and 448 to 638 (SSSS…IVKN). 3 stretches are compositionally biased toward low complexity: residues 388-411 (SLTI…NNNG), 419-430 (LSSSPTNLNTSS), and 462-501 (NNTN…TTTT). Polar residues-rich tracts occupy residues 502–522 (SSSP…NKLT) and 545–573 (SLNS…TDKQ). Residues 575–625 (NSDFSNFNNNNNNNNNNNNNNNNNNNINNNGNNNSNNNDSNNNNNKSNFSD) show a composition bias toward low complexity.

It is found in the nucleus. Putative transcription factor. The chain is Homeobox protein 10 (hbx10) from Dictyostelium discoideum (Social amoeba).